Consider the following 466-residue polypeptide: Putative D-3-phosphoglycerate dehydrogenase (466 aa).

The segment covering 1–15 has biased composition (basic and acidic residues); the sequence is MDIKGGRRGNVEDSL. The interval 1 to 26 is disordered; the sequence is MDIKGGRRGNVEDSLNKLSLSPPDNN. The segment covering 16-26 has biased composition (polar residues); that stretch reads NKLSLSPPDNN. At Ser87 the chain carries Phosphoserine. NAD(+) contacts are provided by residues 205-206 and Asp225; that span reads HI. Ser258 carries the phosphoserine modification. NAD(+)-binding positions include 282–284 and Asp308; that span reads ASR. Arg284 is a catalytic residue. Residue Glu313 is part of the active site. Residue His344 is the Proton donor of the active site. 344 to 347 contacts NAD(+); the sequence is HIGG. In terms of domain architecture, ACT spans 396–466; the sequence is RVLFVHRNVP…PCKINTRLLY (71 aa).

The protein belongs to the D-isomer specific 2-hydroxyacid dehydrogenase family.

The catalysed reaction is (2R)-3-phosphoglycerate + NAD(+) = 3-phosphooxypyruvate + NADH + H(+). The enzyme catalyses (R)-2-hydroxyglutarate + NAD(+) = 2-oxoglutarate + NADH + H(+). Its pathway is amino-acid biosynthesis; L-serine biosynthesis; L-serine from 3-phospho-D-glycerate: step 1/3. Functionally, catalyzes the reversible oxidation of 3-phospho-D-glycerate to 3-phosphonooxypyruvate, the first step of the phosphorylated L-serine biosynthesis pathway. Also catalyzes the reversible oxidation of 2-hydroxyglutarate to 2-oxoglutarate. This chain is Putative D-3-phosphoglycerate dehydrogenase, found in Schizosaccharomyces pombe (strain 972 / ATCC 24843) (Fission yeast).